Consider the following 304-residue polypeptide: tRNA dimethylallyltransferase (304 aa).

2–9 (GPTASGKT) contacts ATP. 4-9 (TASGKT) serves as a coordination point for substrate. Residues 28 to 31 (DSAL) form an interaction with substrate tRNA region.

It belongs to the IPP transferase family. Monomer. It depends on Mg(2+) as a cofactor.

It carries out the reaction adenosine(37) in tRNA + dimethylallyl diphosphate = N(6)-dimethylallyladenosine(37) in tRNA + diphosphate. In terms of biological role, catalyzes the transfer of a dimethylallyl group onto the adenine at position 37 in tRNAs that read codons beginning with uridine, leading to the formation of N6-(dimethylallyl)adenosine (i(6)A). In Blochmanniella pennsylvanica (strain BPEN), this protein is tRNA dimethylallyltransferase.